A 139-amino-acid chain; its full sequence is NADPH-dependent 7-cyano-7-deazaguanine reductase (139 aa).

Cysteine 34 functions as the Thioimide intermediate in the catalytic mechanism. Aspartate 41 functions as the Proton donor in the catalytic mechanism. Substrate-binding positions include 56–58 (VEL) and 75–76 (HE).

Belongs to the GTP cyclohydrolase I family. QueF type 1 subfamily.

The protein localises to the cytoplasm. The enzyme catalyses 7-aminomethyl-7-carbaguanine + 2 NADP(+) = 7-cyano-7-deazaguanine + 2 NADPH + 3 H(+). It participates in tRNA modification; tRNA-queuosine biosynthesis. Catalyzes the NADPH-dependent reduction of 7-cyano-7-deazaguanine (preQ0) to 7-aminomethyl-7-deazaguanine (preQ1). The protein is NADPH-dependent 7-cyano-7-deazaguanine reductase of Nitrosospira multiformis (strain ATCC 25196 / NCIMB 11849 / C 71).